The chain runs to 95 residues: Large ribosomal subunit protein bL25 (95 aa).

The protein belongs to the bacterial ribosomal protein bL25 family. Part of the 50S ribosomal subunit; part of the 5S rRNA/L5/L18/L25 subcomplex. Contacts the 5S rRNA. Binds to the 5S rRNA independently of L5 and L18.

In terms of biological role, this is one of the proteins that binds to the 5S RNA in the ribosome where it forms part of the central protuberance. In Haemophilus influenzae (strain PittGG), this protein is Large ribosomal subunit protein bL25.